Reading from the N-terminus, the 221-residue chain is Tetraspanin-2 (221 aa).

Residues 1–13 are Cytoplasmic-facing; the sequence is MGRFRGGLRCIKY. The helical transmembrane segment at 14 to 34 threads the bilayer; sequence LLLGFNLLFWLAGSAVIAFGL. Topologically, residues 35-54 are extracellular; it reads WFRFGGTIKDLSSEEKSPEY. A helical membrane pass occupies residues 55-75; that stretch reads FYVGLYVLVGAGALMMAVGFF. Topologically, residues 76–90 are cytoplasmic; that stretch reads GCCGAMRESQCVLGS. The chain crosses the membrane as a helical span at residues 91 to 111; sequence FFTCLLVIFAAEVTTGVFAFI. At 112-188 the chain is on the extracellular side; that stretch reads GKDVAIRHVQ…ETIISVKLQL (77 aa). Residue Asn-139 is glycosylated (N-linked (GlcNAc...) asparagine). A helical membrane pass occupies residues 189-209; that stretch reads IGIVGIGIAGLTIFGMIFSMV. Topologically, residues 210–221 are cytoplasmic; the sequence is LCCAIRNSRDVI.

This sequence belongs to the tetraspanin (TM4SF) family. In terms of tissue distribution, expression is restricted to the nervous system.

Its subcellular location is the membrane. Its function is as follows. May play a role in signalling in oligodendrocytes in the early stages of their terminal differentiation into myelin-forming glia and may also function in stabilizing the mature sheath. The protein is Tetraspanin-2 (Tspan2) of Rattus norvegicus (Rat).